A 340-amino-acid polypeptide reads, in one-letter code: Selenide, water dikinase (340 aa).

Cys13 is an active-site residue. ATP-binding positions include Lys16 and Ala43–Asp45. Asp46 provides a ligand contact to Mg(2+). ATP-binding positions include Asp63, Asp86, and Gly133–Ser135. Position 86 (Asp86) interacts with Mg(2+). Asp221 contacts Mg(2+).

It belongs to the selenophosphate synthase 1 family. Class I subfamily. In terms of assembly, homodimer. Mg(2+) is required as a cofactor.

The enzyme catalyses hydrogenselenide + ATP + H2O = selenophosphate + AMP + phosphate + 2 H(+). Its function is as follows. Synthesizes selenophosphate from selenide and ATP. This is Selenide, water dikinase from Desulfitobacterium hafniense (strain DSM 10664 / DCB-2).